A 510-amino-acid polypeptide reads, in one-letter code: DNA nucleotidylexotransferase (510 aa).

The short motif at 11–17 (PRRKQPK) is the Nuclear localization signal element. The BRCT domain maps to 27-124 (KYDIKFKDIA…QPVEIERKHR (98 aa)). The tract at residues 254 to 258 (VGLRT) is involved in DNA binding. A 2'-deoxyribonucleoside 5'-triphosphate is bound by residues 329-334 (GFRRGN) and 338-341 (HDVD). The Mg(2+) site is built by D339, D341, and D434. An a 2'-deoxyribonucleoside 5'-triphosphate-binding site is contributed by 449–450 (GW).

This sequence belongs to the DNA polymerase type-X family. Mg(2+) serves as cofactor.

The protein resides in the nucleus. The enzyme catalyses DNA(n) + a 2'-deoxyribonucleoside 5'-triphosphate = DNA(n+1) + diphosphate. Template-independent DNA polymerase which catalyzes the random addition of deoxynucleoside 5'-triphosphate to the 3'-end of a DNA initiator. One of the in vivo functions of this enzyme is the addition of nucleotides at the junction (N region) of rearranged Ig heavy chain and T-cell receptor gene segments during the maturation of B- and T-cells. This is DNA nucleotidylexotransferase (DNTT) from Ambystoma mexicanum (Axolotl).